A 584-amino-acid polypeptide reads, in one-letter code: DNA mismatch repair protein MutL (584 aa).

The protein belongs to the DNA mismatch repair MutL/HexB family.

In terms of biological role, this protein is involved in the repair of mismatches in DNA. It is required for dam-dependent methyl-directed DNA mismatch repair. May act as a 'molecular matchmaker', a protein that promotes the formation of a stable complex between two or more DNA-binding proteins in an ATP-dependent manner without itself being part of a final effector complex. This Syntrophomonas wolfei subsp. wolfei (strain DSM 2245B / Goettingen) protein is DNA mismatch repair protein MutL.